The following is a 402-amino-acid chain: Tyrosine--tRNA ligase (402 aa).

The 'HIGH' region motif lies at 47–56; it reads PTAPDLHLGH. Positions 232 to 236 match the 'KMSKS' region motif; it reads KMSKS. K235 is an ATP binding site. In terms of domain architecture, S4 RNA-binding spans 341-401; the sequence is VGVLDVLKQI…GKKRFMKLNI (61 aa).

The protein belongs to the class-I aminoacyl-tRNA synthetase family. TyrS type 2 subfamily. In terms of assembly, homodimer.

It localises to the cytoplasm. It catalyses the reaction tRNA(Tyr) + L-tyrosine + ATP = L-tyrosyl-tRNA(Tyr) + AMP + diphosphate + H(+). Its function is as follows. Catalyzes the attachment of tyrosine to tRNA(Tyr) in a two-step reaction: tyrosine is first activated by ATP to form Tyr-AMP and then transferred to the acceptor end of tRNA(Tyr). In Helicobacter pylori (strain J99 / ATCC 700824) (Campylobacter pylori J99), this protein is Tyrosine--tRNA ligase.